We begin with the raw amino-acid sequence, 177 residues long: Large ribosomal subunit protein uL6 (177 aa).

It belongs to the universal ribosomal protein uL6 family. As to quaternary structure, part of the 50S ribosomal subunit.

Its function is as follows. This protein binds to the 23S rRNA, and is important in its secondary structure. It is located near the subunit interface in the base of the L7/L12 stalk, and near the tRNA binding site of the peptidyltransferase center. This Stutzerimonas stutzeri (strain A1501) (Pseudomonas stutzeri) protein is Large ribosomal subunit protein uL6.